Here is a 483-residue protein sequence, read N- to C-terminus: Protein nucleotidyltransferase YdiU (483 aa).

Residues G81, G83, R84, K103, D115, G116, R166, and R173 each contribute to the ATP site. The Proton acceptor role is filled by D244. 2 residues coordinate Mg(2+): N245 and D254. D254 contributes to the ATP binding site.

The protein belongs to the SELO family. The cofactor is Mg(2+). It depends on Mn(2+) as a cofactor.

It catalyses the reaction L-seryl-[protein] + ATP = 3-O-(5'-adenylyl)-L-seryl-[protein] + diphosphate. The catalysed reaction is L-threonyl-[protein] + ATP = 3-O-(5'-adenylyl)-L-threonyl-[protein] + diphosphate. It carries out the reaction L-tyrosyl-[protein] + ATP = O-(5'-adenylyl)-L-tyrosyl-[protein] + diphosphate. The enzyme catalyses L-histidyl-[protein] + UTP = N(tele)-(5'-uridylyl)-L-histidyl-[protein] + diphosphate. It catalyses the reaction L-seryl-[protein] + UTP = O-(5'-uridylyl)-L-seryl-[protein] + diphosphate. The catalysed reaction is L-tyrosyl-[protein] + UTP = O-(5'-uridylyl)-L-tyrosyl-[protein] + diphosphate. In terms of biological role, nucleotidyltransferase involved in the post-translational modification of proteins. It can catalyze the addition of adenosine monophosphate (AMP) or uridine monophosphate (UMP) to a protein, resulting in modifications known as AMPylation and UMPylation. The protein is Protein nucleotidyltransferase YdiU of Shewanella pealeana (strain ATCC 700345 / ANG-SQ1).